The following is an 87-amino-acid chain: Small ribosomal subunit protein uS15c (87 aa).

This sequence belongs to the universal ribosomal protein uS15 family. As to quaternary structure, part of the 30S ribosomal subunit.

It is found in the plastid. The protein resides in the chloroplast. The sequence is that of Small ribosomal subunit protein uS15c (rps15) from Oenothera biennis (German evening primrose).